A 255-amino-acid polypeptide reads, in one-letter code: DNA repair protein RecO (255 aa).

This sequence belongs to the RecO family.

In terms of biological role, involved in DNA repair and RecF pathway recombination. The chain is DNA repair protein RecO from Bacillus velezensis (strain DSM 23117 / BGSC 10A6 / LMG 26770 / FZB42) (Bacillus amyloliquefaciens subsp. plantarum).